Consider the following 192-residue polypeptide: Protein GrpE (192 aa).

The interval 1–34 (MSSKEQKTPNEQVSEEMENAAEQQVEATQETGEG) is disordered. Residues 21 to 31 (AEQQVEATQET) are compositionally biased toward polar residues.

It belongs to the GrpE family. As to quaternary structure, homodimer.

It is found in the cytoplasm. In terms of biological role, participates actively in the response to hyperosmotic and heat shock by preventing the aggregation of stress-denatured proteins, in association with DnaK and GrpE. It is the nucleotide exchange factor for DnaK and may function as a thermosensor. Unfolded proteins bind initially to DnaJ; upon interaction with the DnaJ-bound protein, DnaK hydrolyzes its bound ATP, resulting in the formation of a stable complex. GrpE releases ADP from DnaK; ATP binding to DnaK triggers the release of the substrate protein, thus completing the reaction cycle. Several rounds of ATP-dependent interactions between DnaJ, DnaK and GrpE are required for fully efficient folding. The chain is Protein GrpE from Yersinia enterocolitica serotype O:8 / biotype 1B (strain NCTC 13174 / 8081).